A 95-amino-acid chain; its full sequence is Putative protein RDUR (95 aa).

The segment covering Met1–Ser12 has biased composition (basic and acidic residues). A disordered region spans residues Met1–Cys20.

In terms of biological role, could play a role in innate immunity against viruses. The polypeptide is Putative protein RDUR (Homo sapiens (Human)).